The primary structure comprises 494 residues: UPF0371 protein M28_Spy1076 (494 aa).

It belongs to the UPF0371 family.

The chain is UPF0371 protein M28_Spy1076 from Streptococcus pyogenes serotype M28 (strain MGAS6180).